A 609-amino-acid chain; its full sequence is Pentatricopeptide repeat-containing protein At5g13770, chloroplastic (609 aa).

A chloroplast-targeting transit peptide spans 1 to 44 (MAIASGSWVATVNHHANPHSFTSPTKPIFFLSQKPHNFHVCSSR). PPR repeat units lie at residues 103-137 (ELRT…KALP), 138-168 (DGQT…FRSD), 172-207 (AVSA…GVEP), 208-242 (SPGC…RLSF), 247-281 (SGSI…GIPE), 282-316 (SSEL…KLLK), 317-351 (DPEM…ELKV), 352-386 (TDCI…ECEA), 387-421 (GQVT…GFDK), 422-456 (CVVA…GCKP), 457-491 (NIWI…KVLP), 492-526 (DKVS…RGKI), and 527-561 (DRAM…GTRL).

Belongs to the PPR family. P subfamily.

Its subcellular location is the plastid. The protein resides in the chloroplast. The chain is Pentatricopeptide repeat-containing protein At5g13770, chloroplastic from Arabidopsis thaliana (Mouse-ear cress).